The chain runs to 1537 residues: Dual oxidase (1537 aa).

Residues 1-29 form a disordered region; it reads MSVPSAPHQRAESKNRVPRPGQKNRKLPK. Residues 1 to 626 lie on the Extracellular side of the membrane; that stretch reads MSVPSAPHQR…EGYDYFSGSE (626 aa). The interval 63-628 is peroxidase-like; mediates peroxidase activity; it reads MYSQTEKQRY…YDYFSGSELM (566 aa). Residues Asn133, Asn233, Asn577, and Asn606 are each glycosylated (N-linked (GlcNAc...) asparagine). The chain crosses the membrane as a helical span at residues 627 to 647; sequence LMFIYVCVFLGFVPILCAGAG. Residues 648 to 1029 lie on the Cytoplasmic side of the membrane; that stretch reads YCVVKLQNSK…ITFLEENRQN (382 aa). Phosphoserine is present on Ser826. 3 EF-hand domains span residues 855–890, 891–926, and 936–971; these read PNDM…FSRG, KTDD…LVEI, and QVTE…YKGD. Ca(2+) is bound by residues Asp868, Asp870, Asp872, Arg874, Glu879, Asp904, Asp906, Asn908, and Glu915. A helical membrane pass occupies residues 1030–1050; sequence IFYLFLFYVVTIVLFVERFIH. Topologically, residues 1051-1065 are extracellular; the sequence is YSFMAEHTDLRHIMG. The helical transmembrane segment at 1066–1086 threads the bilayer; sequence VGIAITRGSAASLSFCYSLLL. The 141-residue stretch at 1078-1218 folds into the Ferric oxidoreductase domain; the sequence is LSFCYSLLLL…TLYIGLYLLS (141 aa). Residues 1087–1116 lie on the Cytoplasmic side of the membrane; the sequence is LTMSRNLITKLKEFPIQQYIPLDSHIQFHK. Tyr1105 carries the phosphotyrosine modification. A helical transmembrane segment spans residues 1117–1137; sequence IAACTALFFSVLHTVGHIVNF. At 1138 to 1171 the chain is on the extracellular side; the sequence is YHVSTQSHENLRCLTREVHFASDYKPDITFWLFQ. A helical transmembrane segment spans residues 1172 to 1192; that stretch reads TVTGTTGVMLFIIMCIIFVFA. Topologically, residues 1193–1202 are cytoplasmic; that stretch reads HPTIRKKAYN. Residues 1203–1223 traverse the membrane as a helical segment; the sequence is FFWNMHTLYIGLYLLSLIHGL. Residues 1224–1230 are Extracellular-facing; the sequence is ARLTGPP. The helical transmembrane segment at 1231–1251 threads the bilayer; it reads RFWMFFLGPGIVYTLDKIVSL. Topologically, residues 1252 to 1537 are cytoplasmic; sequence RTKYMALDVI…YFIHHFENFG (286 aa). The FAD-binding FR-type domain occupies 1253-1358; it reads TKYMALDVID…EGPFGGGNQD (106 aa).

The protein in the N-terminal section; belongs to the peroxidase family.

The protein localises to the membrane. The enzyme catalyses NADH + O2 + H(+) = H2O2 + NAD(+). The catalysed reaction is NADPH + O2 + H(+) = H2O2 + NADP(+). Peroxidase activity is inhibited by aminotriazole and azide. Functionally, plays a role in innate immunity limiting microbial proliferation in the gut. Acts downstream of a hh-signaling pathway to induce the production of reactive oxygen species (ROS) in response to intestinal bacterial infection. May generate antimicrobial oxidative burst through its peroxidase-like domain. The protein is Dual oxidase (Duox) of Drosophila melanogaster (Fruit fly).